The primary structure comprises 511 residues: DnaJ homolog 1, mitochondrial (511 aa).

The transit peptide at 1 to 55 (MAFQQGVLSRCSGVFRHHVGHSRHINNILYRHAIAFASIAPRIPKSSFHTSAIRN) directs the protein to the mitochondrion. The region spanning 59 to 127 (FKDPYDTLGL…RQQYDQFGPA (69 aa)) is the J domain. The segment at 217–297 (SKNVQLRFSA…CHGEGVQVNR (81 aa)) adopts a CR-type zinc-finger fold. CXXCXGXG motif repeat units follow at residues 230–237 (CSTCSGTG), 247–254 (CSTCHGTG), 269–276 (CPTCNGEG), and 285–292 (CTKCHGEG).

The protein localises to the mitochondrion. Its function is as follows. Plays a role in mitochondrial biogenesis and protein folding. In Saccharomyces cerevisiae (strain ATCC 204508 / S288c) (Baker's yeast), this protein is DnaJ homolog 1, mitochondrial (MDJ1).